Reading from the N-terminus, the 284-residue chain is RNase adapter protein RapZ (284 aa).

8 to 15 (GRSGSGKS) lines the ATP pocket. 56–59 (DVRN) provides a ligand contact to GTP. Positions 266 to 284 (RSRGKNVQSRHRTLEKRKT) are RNA-binding.

It belongs to the RapZ-like family. RapZ subfamily. Homotrimer.

Modulates the synthesis of GlmS, by affecting the processing and stability of the regulatory small RNA GlmZ. When glucosamine-6-phosphate (GlcN6P) concentrations are high in the cell, RapZ binds GlmZ and targets it to cleavage by RNase E. Consequently, GlmZ is inactivated and unable to activate GlmS synthesis. Under low GlcN6P concentrations, RapZ is sequestered and inactivated by an other regulatory small RNA, GlmY, preventing GlmZ degradation and leading to synthesis of GlmS. The protein is RNase adapter protein RapZ of Salmonella arizonae (strain ATCC BAA-731 / CDC346-86 / RSK2980).